The sequence spans 215 residues: Dual specificity phosphatase 29 (215 aa).

A Tyrosine-protein phosphatase domain is found at 53–201 (HVNEVWPRLH…LRELDKQLVK (149 aa)). Residue 145 to 152 (HCAMGRSR) participates in substrate binding. Cys-146 functions as the Phosphocysteine intermediate in the catalytic mechanism.

Belongs to the protein-tyrosine phosphatase family. Non-receptor class dual specificity subfamily. In terms of assembly, homodimer. Interacts with PRKAA2.

Its subcellular location is the cytoplasm. The protein localises to the nucleus. The enzyme catalyses O-phospho-L-tyrosyl-[protein] + H2O = L-tyrosyl-[protein] + phosphate. It carries out the reaction O-phospho-L-seryl-[protein] + H2O = L-seryl-[protein] + phosphate. The catalysed reaction is O-phospho-L-threonyl-[protein] + H2O = L-threonyl-[protein] + phosphate. In terms of biological role, dual specificity phosphatase able to dephosphorylate phosphotyrosine, phosphoserine and phosphothreonine residues within the same substrate, with a preference for phosphotyrosine as a substrate. Involved in the modulation of intracellular signaling cascades. In skeletal muscle regulates systemic glucose homeostasis by activating, AMPK, an energy sensor protein kinase. Affects MAP kinase signaling though modulation of the MAPK1/2 cascade in skeletal muscle promoting muscle cell differentiation, development and atrophy. This chain is Dual specificity phosphatase 29 (Dusp29), found in Rattus norvegicus (Rat).